Reading from the N-terminus, the 282-residue chain is Nucleotide-binding protein Fnod_1159 (282 aa).

9 to 16 (GHSGAGKS) contributes to the ATP binding site. 57-60 (DIRS) serves as a coordination point for GTP.

The protein belongs to the RapZ-like family.

Its function is as follows. Displays ATPase and GTPase activities. This is Nucleotide-binding protein Fnod_1159 from Fervidobacterium nodosum (strain ATCC 35602 / DSM 5306 / Rt17-B1).